We begin with the raw amino-acid sequence, 139 residues long: Small ribosomal subunit protein bS6 (139 aa).

The interval 120–139 (KGASKVETPTGPESTDIQEK) is disordered. Residues 130 to 139 (GPESTDIQEK) show a composition bias toward polar residues.

This sequence belongs to the bacterial ribosomal protein bS6 family.

In terms of biological role, binds together with bS18 to 16S ribosomal RNA. This is Small ribosomal subunit protein bS6 (rpsF) from Borreliella burgdorferi (strain ATCC 35210 / DSM 4680 / CIP 102532 / B31) (Borrelia burgdorferi).